Here is a 353-residue protein sequence, read N- to C-terminus: Photosystem II protein D1 (353 aa).

Thr-2 is modified (N-acetylthreonine). A Phosphothreonine modification is found at Thr-2. The next 3 helical transmembrane spans lie at 29–46 (YIGWFGVLMIPTLLTATS), 118–133 (HFLLGVACYMGREWEL), and 142–156 (WIAVAYSAPVAAATA). Position 118 (His-118) interacts with chlorophyll a. Position 126 (Tyr-126) interacts with pheophytin a. 2 residues coordinate [CaMn4O5] cluster: Asp-170 and Glu-189. A helical membrane pass occupies residues 197–218 (FHMLGVAGVFGGSLFSAMHGSL). His-198 provides a ligand contact to chlorophyll a. A quinone is bound by residues His-215 and 264–265 (SF). His-215 provides a ligand contact to Fe cation. Residue His-272 participates in Fe cation binding. The chain crosses the membrane as a helical span at residues 274–288 (FLAAWPVVGIWFTAL). His-332, Glu-333, Asp-342, and Ala-344 together coordinate [CaMn4O5] cluster. Positions 345–353 (AVEAPSTNG) are excised as a propeptide.

It belongs to the reaction center PufL/M/PsbA/D family. In terms of assembly, PSII is composed of 1 copy each of membrane proteins PsbA, PsbB, PsbC, PsbD, PsbE, PsbF, PsbH, PsbI, PsbJ, PsbK, PsbL, PsbM, PsbT, PsbX, PsbY, PsbZ, Psb30/Ycf12, at least 3 peripheral proteins of the oxygen-evolving complex and a large number of cofactors. It forms dimeric complexes. The cofactor is The D1/D2 heterodimer binds P680, chlorophylls that are the primary electron donor of PSII, and subsequent electron acceptors. It shares a non-heme iron and each subunit binds pheophytin, quinone, additional chlorophylls, carotenoids and lipids. D1 provides most of the ligands for the Mn4-Ca-O5 cluster of the oxygen-evolving complex (OEC). There is also a Cl(-1) ion associated with D1 and D2, which is required for oxygen evolution. The PSII complex binds additional chlorophylls, carotenoids and specific lipids.. Post-translationally, tyr-161 forms a radical intermediate that is referred to as redox-active TyrZ, YZ or Y-Z. In terms of processing, C-terminally processed by CTPA; processing is essential to allow assembly of the oxygen-evolving complex and thus photosynthetic growth.

Its subcellular location is the plastid. The protein resides in the chloroplast thylakoid membrane. The enzyme catalyses 2 a plastoquinone + 4 hnu + 2 H2O = 2 a plastoquinol + O2. Photosystem II (PSII) is a light-driven water:plastoquinone oxidoreductase that uses light energy to abstract electrons from H(2)O, generating O(2) and a proton gradient subsequently used for ATP formation. It consists of a core antenna complex that captures photons, and an electron transfer chain that converts photonic excitation into a charge separation. The D1/D2 (PsbA/PsbD) reaction center heterodimer binds P680, the primary electron donor of PSII as well as several subsequent electron acceptors. In Drimys granadensis, this protein is Photosystem II protein D1.